The primary structure comprises 314 residues: Short-chain dehydrogenase/reductase sthC (314 aa).

Residues 1-10 (MAPAETTGNV) are compositionally biased toward polar residues. The disordered stretch occupies residues 1-27 (MAPAETTGNVQRPEAGKQSMGSFWTQM). Residues Val56, Lys80, Asp105, Asn132, and Arg167 each coordinate NADP(+). Catalysis depends on Ser191, which acts as the Proton donor. NADP(+) contacts are provided by Tyr222 and Lys226. The Proton acceptor role is filled by Tyr222. Catalysis depends on Lys226, which acts as the Lowers pKa of active site Tyr.

This sequence belongs to the short-chain dehydrogenases/reductases (SDR) family.

It catalyses the reaction dehydroprobetaenone I + AH2 = probetaenone I + A. The enzyme catalyses betaenone C + AH2 = betaenone B + A. Its pathway is mycotoxin biosynthesis. Its function is as follows. Short-chain dehydrogenase/reductase; part of the gene cluster that mediates the biosynthesis of the phytotoxin stemphyloxin II. The first step of the pathway is the synthesis of dehydroprobetaenone I by the polyketide synthase sthA and the enoyl reductase sthE via condensation of one acetyl-CoA starter unit with 7 malonyl-CoA units and 5 methylations. The C-terminal reductase (R) domain of sthA catalyzes the reductive release of the polyketide chain. Because sthA lacks a designated enoylreductase (ER) domain, the required activity is provided the enoyl reductase sthE. The short-chain dehydrogenase/reductase sthC then catalyzes reduction of dehydroprobetaenone I to probetaenone I. The cytochrome P450 monooxygenase sthF catalyzes successive epoxidation, oxidation (resulting from epoxide opening) and hydroxylation to install a tertiary alcohol in the decaline ring to yield betaenone C from dehydroprobetaenone I and betaenone B from probetaenone I. The FAD-linked oxidoreductase sthB is responsible for the conversion of betaenone C to betaenone A via an intramolecular aldol reaction between C-1 and C-17 to form the bridged tricyclic system in betaenone A. Finally, the cytochrome P450 monooxygenase sthD catalyzes the hydroxylation of C-15 to afford the final metabolite stemphyloxin II. This is Short-chain dehydrogenase/reductase sthC from Phaeosphaeria nodorum (strain SN15 / ATCC MYA-4574 / FGSC 10173) (Glume blotch fungus).